Here is a 182-residue protein sequence, read N- to C-terminus: Large ribosomal subunit protein uL10 (182 aa).

Belongs to the universal ribosomal protein uL10 family. In terms of assembly, part of the ribosomal stalk of the 50S ribosomal subunit. The N-terminus interacts with L11 and the large rRNA to form the base of the stalk. The C-terminus forms an elongated spine to which L12 dimers bind in a sequential fashion forming a multimeric L10(L12)X complex.

Functionally, forms part of the ribosomal stalk, playing a central role in the interaction of the ribosome with GTP-bound translation factors. The protein is Large ribosomal subunit protein uL10 of Leptothrix cholodnii (strain ATCC 51168 / LMG 8142 / SP-6) (Leptothrix discophora (strain SP-6)).